Here is a 371-residue protein sequence, read N- to C-terminus: Transcription factor MYB12 (371 aa).

HTH myb-type domains lie at 9–61 (KVGI…INYL) and 62–116 (RSDL…SRKL). 2 DNA-binding regions (H-T-H motif) span residues 37-61 (WRSLPKNAGLKRCGKSCRLRWINYL) and 89-112 (WSLIAGHLPGRTDNEIKNYWNSHL). The tract at residues 136 to 183 (NASSAPPPPQAKRRLGRTSRSAMKPKIHRTKTRKTKKTSAPPEPNADV) is disordered. Residues 146–172 (AKRRLGRTSRSAMKPKIHRTKTRKTKK) are compositionally biased toward basic residues.

As to expression, expressed in stems and flower buds. Expressed in seedlings, roots, cotyledons and apical meristems.

Its subcellular location is the nucleus. Its function is as follows. Flavonol-specific transcription activator involved in the regulation of several genes of flavonoid biosynthesis. Activates the expression of CHS, CHI, F3H and FLS1. Controls flavonol biosynthesis mainly in the root. Confers tolerance to UV-B. This is Transcription factor MYB12 from Arabidopsis thaliana (Mouse-ear cress).